We begin with the raw amino-acid sequence, 74 residues long: DUP240 protein DFP2 (74 aa).

The protein belongs to the DUP/COS family.

The protein localises to the cytoplasm. It is found in the membrane. In Saccharomyces cerevisiae (strain ATCC 204508 / S288c) (Baker's yeast), this protein is DUP240 protein DFP2.